A 1303-amino-acid polypeptide reads, in one-letter code: Ninein-like protein (1303 aa).

EF-hand domains lie at 8-43 (RYVA…LSLD) and 61-77 (RVNF…VLSR). A disordered region spans residues 107-135 (TKRYGRRSRPDKTDLELTADSDSLPFGTD). 2 EF-hand domains span residues 203–238 (VTDG…IGLK) and 240–275 (LEAE…PHDH). Ca(2+) contacts are provided by D253, D255, D257, K259, and E264. A coiled-coil region spans residues 464 to 590 (EYESEVLLEQ…CSELELLKSQ (127 aa)). Polar residues predominate over residues 592 to 617 (SGKRTRLSRSSLPANDWSNRRALTTE). A disordered region spans residues 592–634 (SGKRTRLSRSSLPANDWSNRRALTTESDSDDPEMKKGTSPQVR). Coiled coils occupy residues 660-791 (ELAM…LEAE), 821-876 (LAVL…LSAR), and 919-1146 (SKQL…VQAQ). The disordered stretch occupies residues 1156–1181 (EQMGSGTQEHASHLQTQLAEQQRRTQ). Positions 1159-1175 (GSGTQEHASHLQTQLAE) are enriched in polar residues. Positions 1202 to 1278 (QEQYEKLMAS…EQRQKSAEKK (77 aa)) form a coiled coil.

Its subcellular location is the cytoplasm. It is found in the cytoskeleton. It localises to the microtubule organizing center. The protein localises to the centrosome. Required for the intracellular transport of organelles and vesicles, and is essential for the photoreceptor's outer segments formation, maintenance and function. The polypeptide is Ninein-like protein (Ninl) (Danio rerio (Zebrafish)).